We begin with the raw amino-acid sequence, 469 residues long: Cell division protein FtsP (469 aa).

Residues Met1–Ala27 constitute a signal peptide (tat-type signal).

It belongs to the FtsP family. Predicted to be exported by the Tat system. The position of the signal peptide cleavage has not been experimentally proven.

Its subcellular location is the periplasm. In terms of biological role, cell division protein that is required for growth during stress conditions. May be involved in protecting or stabilizing the divisomal assembly under conditions of stress. This Glaesserella parasuis serovar 5 (strain SH0165) (Haemophilus parasuis) protein is Cell division protein FtsP.